The primary structure comprises 506 residues: MESTAIVPKGPVVGSEDMEKAEVIASGSTDIISTTSTATTTAAIGSVQEESVKQEDVPMEGGEGEVEEEEGETRCICGELDTPDDSGFFIQCEQCSSWQHGYCVSITQDNAPDKYWCEQCRPELHQLFTTDTGEARSIYKPVQEKRRQSRRKARSAAASKSHAANEAEKSPRNTSNTDDNVDDIGDEEDEVEDEASAVALAKDGNTRSSRRRRRNSMDDASTDQYSLDPGDSDKKLLDRKRATFMAREEKQYQRMLEKALKESRRTSHQEDPESYENDADIYQGDTDNHNGTTRLQTDVMLTEGKPDSVTNDDMKESLRPSKEQSMEKTNDVEKEASQEKESSTGSAQDTEKTDEPILPLTSISSSEDDSRKASSRGSKRVSKPARKGNRTRRSNTSSDTNQNRRSADIGTDKPVKPRLPPQRTSLNEMRRRVSAILEFISRTQWELSEDQSDREEFVRFVENQHFVEKVDTIYNGYNESLSMMDDLTRELLLWEKKYSNNTNAIQ.

The interval 49 to 71 (EESVKQEDVPMEGGEGEVEEEEG) is disordered. The span at 62 to 71 (GEGEVEEEEG) shows a compositional bias: acidic residues. The segment at 72–123 (ETRCICGELDTPDDSGFFIQCEQCSSWQHGYCVSITQDNAPDKYWCEQCRPE) adopts a PHD-type zinc-finger fold. Residues 138-425 (IYKPVQEKRR…KPRLPPQRTS (288 aa)) form a disordered region. Position 174 is a phosphothreonine (Thr174). Ser175 is modified (phosphoserine). The residue at position 177 (Thr177) is a Phosphothreonine. Over residues 179-195 (DNVDDIGDEEDEVEDEA) the composition is skewed to acidic residues. Ser216 and Ser267 each carry phosphoserine. Basic and acidic residues-rich tracts occupy residues 231–271 (DSDK…HQED) and 312–342 (DDMK…EKES). Over residues 373–393 (ASSRGSKRVSKPARKGNRTRR) the composition is skewed to basic residues. Over residues 394-404 (SNTSSDTNQNR) the composition is skewed to polar residues. Basic and acidic residues predominate over residues 405-415 (RSADIGTDKPV).

As to quaternary structure, component of the RPD3C(L) complex composed of at least ASH1, CTI6, DEP1, PHO23, RPD3, RXT2, RXT3, SAP30, SDS3, SIN3, UME1 and UME6. Interacts with CYC8.

The protein resides in the nucleus. Functionally, component of the RPD3C(L) histone deacetylase complex (HDAC). Responsible for the deacetylation of lysine residues on the N-terminal part of the core histones (H2A, H2B, H3 and H4). Histone deacetylation gives a tag for epigenetic repression and plays an important role in transcriptional regulation, cell cycle progression and developmental events. CTI6 links the SAGA coactivator to the CYC8-TUP1 corepressor. Involved in transcription regulation of heme-regulated genes and required for GCN5 recruitment, histone H3 acetylation and SPT15/TBP binding to promoters. In Saccharomyces cerevisiae (strain ATCC 204508 / S288c) (Baker's yeast), this protein is Histone deacetylase complex subunit CTI6 (CTI6).